The chain runs to 147 residues: Hemoglobin larval subunit beta-1 (147 aa).

The 145-residue stretch at histidine 3 to phenylalanine 147 folds into the Globin domain. Residues histidine 64 and histidine 93 each coordinate heme b.

The protein belongs to the globin family. In terms of assembly, heterotetramer of two alpha chains and two beta chains. In terms of tissue distribution, red blood cells.

Functionally, this is a larval (tadpole) beta-globin. The sequence is that of Hemoglobin larval subunit beta-1 from Xenopus laevis (African clawed frog).